Consider the following 132-residue polypeptide: Nuclear transition protein 2 (132 aa).

The span at 1-20 (MDTKTQSLPNTHAQPHSNSR) shows a compositional bias: polar residues. A disordered region spans residues 1–132 (MDTKTQSLPN…KRQSSGRKYN (132 aa)). The Zn(2+) site is built by histidine 12, histidine 16, histidine 24, cysteine 29, cysteine 31, and cysteine 35. Residues 37–59 (SRSRSRSCRSRSSSRRPRSHRSP) are compositionally biased toward basic residues. A compositionally biased stretch (polar residues) spans 82 to 94 (SHQCPSRPVTHSC). Positions 105–113 (GKVIKRKQV) match the Nuclear localization signal motif. The span at 108 to 132 (IKRKQVKRSKQVYKRKRQSSGRKYN) shows a compositional bias: basic residues. Residue serine 127 is modified to Phosphoserine.

Belongs to the nuclear transition protein 2 family. As to expression, testis.

It is found in the nucleus. Its subcellular location is the nucleolus. It localises to the chromosome. Plays a key role in the replacement of histones to protamine in the elongating spermatids of mammals. In condensing spermatids, loaded onto the nucleosomes, where it promotes the recruitment and processing of protamines, which are responsible for histone eviction. In Bos taurus (Bovine), this protein is Nuclear transition protein 2 (TNP2).